The following is a 110-amino-acid chain: Large ribosomal subunit protein uL22 (110 aa).

Belongs to the universal ribosomal protein uL22 family. As to quaternary structure, part of the 50S ribosomal subunit.

In terms of biological role, this protein binds specifically to 23S rRNA; its binding is stimulated by other ribosomal proteins, e.g. L4, L17, and L20. It is important during the early stages of 50S assembly. It makes multiple contacts with different domains of the 23S rRNA in the assembled 50S subunit and ribosome. Functionally, the globular domain of the protein is located near the polypeptide exit tunnel on the outside of the subunit, while an extended beta-hairpin is found that lines the wall of the exit tunnel in the center of the 70S ribosome. The chain is Large ribosomal subunit protein uL22 from Idiomarina loihiensis (strain ATCC BAA-735 / DSM 15497 / L2-TR).